A 274-amino-acid chain; its full sequence is MAVKKIRPLTPGQRFRIAPDFSVLTKTKPEKSLLLPIKSTGGRNNTGKMTIRYKGGGHKKRMRIIDFKRRKYDIPAVVNSIQYDPMRTAYIALLYYVDGAKSYIIAPEGLKVGDRVLSGNNIAPEVGNAMPLRTMPTGTIVHNIELHPGRGAAMARSAGTYAQLLAKEERYVTLKLPSGEMRMVLGECMATVGTVSNSEHNNIVLGKAGRNRWLGRRPRVRGVAMNPVDHPMGGGEGKASGGHPRSRTGLYAKGKKTRNTNKYSKNYILSRKKR.

The tract at residues 223-274 is disordered; sequence VAMNPVDHPMGGGEGKASGGHPRSRTGLYAKGKKTRNTNKYSKNYILSRKKR.

Belongs to the universal ribosomal protein uL2 family. In terms of assembly, part of the 50S ribosomal subunit. Forms a bridge to the 30S subunit in the 70S ribosome.

One of the primary rRNA binding proteins. Required for association of the 30S and 50S subunits to form the 70S ribosome, for tRNA binding and peptide bond formation. It has been suggested to have peptidyltransferase activity; this is somewhat controversial. Makes several contacts with the 16S rRNA in the 70S ribosome. This Amoebophilus asiaticus (strain 5a2) protein is Large ribosomal subunit protein uL2.